A 721-amino-acid polypeptide reads, in one-letter code: ATP-dependent zinc metalloprotease FtsH (721 aa).

The Cytoplasmic segment spans residues Met1–Arg44. The helical transmembrane segment at Ile45–Phe65 threads the bilayer. Over Ser66–Pro190 the chain is Extracellular. The helical transmembrane segment at Gln191–Leu211 threads the bilayer. Over Arg212 to Asn721 the chain is Cytoplasmic. ATP is bound at residue Gly279 to Thr286. His498 lines the Zn(2+) pocket. The active site involves Glu499. 2 residues coordinate Zn(2+): His502 and Asp577. Residues Asn686–Asn721 form a disordered region. A compositionally biased stretch (basic and acidic residues) spans Glu700–Asn721.

The protein in the central section; belongs to the AAA ATPase family. In the C-terminal section; belongs to the peptidase M41 family. Homohexamer. The cofactor is Zn(2+).

It is found in the cell membrane. Its function is as follows. Acts as a processive, ATP-dependent zinc metallopeptidase for both cytoplasmic and membrane proteins. Plays a role in the quality control of integral membrane proteins. In Ureaplasma parvum serovar 3 (strain ATCC 27815 / 27 / NCTC 11736), this protein is ATP-dependent zinc metalloprotease FtsH.